Reading from the N-terminus, the 79-residue chain is Defensin-like protein 272 (79 aa).

The N-terminal stretch at 1 to 24 (MSSKIKFVALLIVVISLLLNNAQS) is a signal peptide. Disulfide bonds link C34-C77, C43-C63, C49-C75, and C53-C76.

This sequence belongs to the DEFL family.

Its subcellular location is the secreted. This is Defensin-like protein 272 from Arabidopsis thaliana (Mouse-ear cress).